A 157-amino-acid polypeptide reads, in one-letter code: Endoribonuclease YbeY (157 aa).

3 residues coordinate Zn(2+): His116, His120, and His126.

The protein belongs to the endoribonuclease YbeY family. Zn(2+) serves as cofactor.

The protein resides in the cytoplasm. Its function is as follows. Single strand-specific metallo-endoribonuclease involved in late-stage 70S ribosome quality control and in maturation of the 3' terminus of the 16S rRNA. The polypeptide is Endoribonuclease YbeY (Paenarthrobacter aurescens (strain TC1)).